The following is a 31-amino-acid chain: Phospholipase A2 homolog P-elapitoxin-Aa1a beta chain (31 aa).

Belongs to the phospholipase A2 family. Group I subfamily. Heterotrimer of alpha, beta and gamma chains, each related to PLA2. In terms of tissue distribution, expressed by the venom gland.

The protein localises to the secreted. Its function is as follows. Heterotrimer: Snake venom phospholipase A2 (PLA2) that has presynaptic neurotoxicity. Inhibits nerve-evoked twitch contractions but not responses to cholinergic agonists acetylcholine and carbachol and to depolarizing agonist KCl. Causes a fade in tetanic contractions. Displays a triphasic mode of action with depression, enhancement and blockade of neurotransmission. Does not display myotoxic activity such as changes in baseline muscle tension or inhibition of directly stimulated muscle twitches. All subunits are necessary for maximum toxicity. In terms of biological role, monomer: The beta chain has no enzymatic activity and is not toxic by itself. The sequence is that of Phospholipase A2 homolog P-elapitoxin-Aa1a beta chain from Acanthophis antarcticus (Common death adder).